The chain runs to 542 residues: Chondroitin sulfate N-acetylgalactosaminyltransferase 2 (542 aa).

Residues 1-13 (MSRRGSILHSRTQ) are Cytoplasmic-facing. Residues 14–34 (WLLLGLALLFSLVLFMYLLEC) form a helical; Signal-anchor for type II membrane protein membrane-spanning segment. The Lumenal portion of the chain corresponds to 35 to 542 (APQTDGNASL…AYRTNSETAG (508 aa)). The N-linked (GlcNAc...) asparagine glycan is linked to asparagine 41. Positions 59–105 (ALLQEQEEHYQTRATSLKRQIAQLKQELQDMSEKMRALQERKKLGAN) form a coiled coil. Asparagine 333 carries N-linked (GlcNAc...) asparagine glycosylation. A divalent metal cation contacts are provided by aspartate 369 and histidine 486.

The protein belongs to the chondroitin N-acetylgalactosaminyltransferase family.

Its subcellular location is the golgi apparatus. The protein resides in the golgi stack membrane. It catalyses the reaction 3-O-(beta-D-GlcA-(1-&gt;3)-beta-D-Gal-(1-&gt;3)-beta-D-Gal-(1-&gt;4)-beta-D-Xyl)-L-seryl-[protein] + UDP-N-acetyl-alpha-D-galactosamine = 3-O-(beta-D-GalNAc-(1-&gt;4)-beta-D-GlcA-(1-&gt;3)-beta-D-Gal-(1-&gt;3)-beta-D-Gal-(1-&gt;4)-beta-D-Xyl)-L-seryl-[protein] + UDP + H(+). Functionally, transfers 1,4-N-acetylgalactosamine (GalNAc) from UDP-GalNAc to the non-reducing end of glucuronic acid (GlcUA). Required for addition of the first GalNAc to the core tetrasaccharide linker and for elongation of chondroitin chains. The polypeptide is Chondroitin sulfate N-acetylgalactosaminyltransferase 2 (Csgalnact2) (Mus musculus (Mouse)).